A 785-amino-acid polypeptide reads, in one-letter code: DNA ligase (785 aa).

NAD(+) contacts are provided by residues 32–36, 81–82, and glutamate 121; these read DAEYD and SL. Lysine 123 serves as the catalytic N6-AMP-lysine intermediate. NAD(+) is bound by residues arginine 144, glutamate 181, lysine 297, and lysine 321. Residues cysteine 415, cysteine 418, cysteine 445, and cysteine 451 each contribute to the Zn(2+) site. The BRCT domain maps to 702-785; the sequence is VEGLPLAGET…AFLKGHGISA (84 aa).

Belongs to the NAD-dependent DNA ligase family. LigA subfamily. Mg(2+) serves as cofactor. Mn(2+) is required as a cofactor.

It carries out the reaction NAD(+) + (deoxyribonucleotide)n-3'-hydroxyl + 5'-phospho-(deoxyribonucleotide)m = (deoxyribonucleotide)n+m + AMP + beta-nicotinamide D-nucleotide.. Functionally, DNA ligase that catalyzes the formation of phosphodiester linkages between 5'-phosphoryl and 3'-hydroxyl groups in double-stranded DNA using NAD as a coenzyme and as the energy source for the reaction. It is essential for DNA replication and repair of damaged DNA. The polypeptide is DNA ligase (Pseudomonas fluorescens (strain Pf0-1)).